Here is a 292-residue protein sequence, read N- to C-terminus: Ribosomal protein L11 methyltransferase (292 aa).

Residues Thr144, Gly165, Asp187, and Asn229 each coordinate S-adenosyl-L-methionine.

The protein belongs to the methyltransferase superfamily. PrmA family.

It localises to the cytoplasm. The catalysed reaction is L-lysyl-[protein] + 3 S-adenosyl-L-methionine = N(6),N(6),N(6)-trimethyl-L-lysyl-[protein] + 3 S-adenosyl-L-homocysteine + 3 H(+). Its function is as follows. Methylates ribosomal protein L11. The chain is Ribosomal protein L11 methyltransferase from Pseudomonas putida (strain GB-1).